The following is a 155-amino-acid chain: NADPH-dependent 7-cyano-7-deazaguanine reductase (155 aa).

Catalysis depends on Cys52, which acts as the Thioimide intermediate. Asp59 serves as the catalytic Proton donor. Residues 74–76 (VES) and 93–94 (HE) each bind substrate.

Belongs to the GTP cyclohydrolase I family. QueF type 1 subfamily.

Its subcellular location is the cytoplasm. The enzyme catalyses 7-aminomethyl-7-carbaguanine + 2 NADP(+) = 7-cyano-7-deazaguanine + 2 NADPH + 3 H(+). It functions in the pathway tRNA modification; tRNA-queuosine biosynthesis. In terms of biological role, catalyzes the NADPH-dependent reduction of 7-cyano-7-deazaguanine (preQ0) to 7-aminomethyl-7-deazaguanine (preQ1). This Syntrophobacter fumaroxidans (strain DSM 10017 / MPOB) protein is NADPH-dependent 7-cyano-7-deazaguanine reductase.